A 132-amino-acid chain; its full sequence is ATP synthase epsilon chain (132 aa).

The protein belongs to the ATPase epsilon chain family. F-type ATPases have 2 components, CF(1) - the catalytic core - and CF(0) - the membrane proton channel. CF(1) has five subunits: alpha(3), beta(3), gamma(1), delta(1), epsilon(1). CF(0) has three main subunits: a, b and c.

Its subcellular location is the cell membrane. In terms of biological role, produces ATP from ADP in the presence of a proton gradient across the membrane. This Clostridium kluyveri (strain NBRC 12016) protein is ATP synthase epsilon chain.